The sequence spans 112 residues: UPF0102 protein THEYE_A1950 (112 aa).

It belongs to the UPF0102 family.

This chain is UPF0102 protein THEYE_A1950, found in Thermodesulfovibrio yellowstonii (strain ATCC 51303 / DSM 11347 / YP87).